The chain runs to 459 residues: Chromosomal replication initiator protein DnaA (459 aa).

The tract at residues 1–74 (MQKIETFWYF…DEMAQGHFNE (74 aa)) is domain I, interacts with DnaA modulators. The segment at 74-122 (EKIHFKLELKDPAEIKTATIKAPEPKSKEDKKPPTDKAHGTTARKTNPS) is domain II. The interval 91–123 (ATIKAPEPKSKEDKKPPTDKAHGTTARKTNPSR) is disordered. A compositionally biased stretch (basic and acidic residues) spans 96–112 (PEPKSKEDKKPPTDKAH). A domain III, AAA+ region region spans residues 123-339 (RLNPAFTFDA…GALKRVLAYS (217 aa)). The ATP site is built by glycine 167, glycine 169, lysine 170, and threonine 171. A domain IV, binds dsDNA region spans residues 340–459 (RFTGHPISLD…YSTLIHILRG (120 aa)).

The protein belongs to the DnaA family. In terms of assembly, oligomerizes as a right-handed, spiral filament on DNA at oriC.

Its subcellular location is the cytoplasm. Functionally, plays an essential role in the initiation and regulation of chromosomal replication. ATP-DnaA binds to the origin of replication (oriC) to initiate formation of the DNA replication initiation complex once per cell cycle. Binds the DnaA box (a 9 base pair repeat at the origin) and separates the double-stranded (ds)DNA. Forms a right-handed helical filament on oriC DNA; dsDNA binds to the exterior of the filament while single-stranded (ss)DNA is stabiized in the filament's interior. The ATP-DnaA-oriC complex binds and stabilizes one strand of the AT-rich DNA unwinding element (DUE), permitting loading of DNA polymerase. After initiation quickly degrades to an ADP-DnaA complex that is not apt for DNA replication. Binds acidic phospholipids. This is Chromosomal replication initiator protein DnaA from Nitrosomonas eutropha (strain DSM 101675 / C91 / Nm57).